Here is a 176-residue protein sequence, read N- to C-terminus: ATP-dependent protease subunit HslV (176 aa).

Thr2 is an active-site residue. Gly157, Cys160, and Thr163 together coordinate Na(+).

Belongs to the peptidase T1B family. HslV subfamily. As to quaternary structure, a double ring-shaped homohexamer of HslV is capped on each side by a ring-shaped HslU homohexamer. The assembly of the HslU/HslV complex is dependent on binding of ATP.

Its subcellular location is the cytoplasm. The enzyme catalyses ATP-dependent cleavage of peptide bonds with broad specificity.. With respect to regulation, allosterically activated by HslU binding. In terms of biological role, protease subunit of a proteasome-like degradation complex believed to be a general protein degrading machinery. The polypeptide is ATP-dependent protease subunit HslV (Pseudomonas fluorescens (strain SBW25)).